A 68-amino-acid chain; its full sequence is Beta-defensin 1 (68 aa).

The first 21 residues, 1-21 (MRTSYLLLFTLCLLLSEMASG), serve as a signal peptide directing secretion. Positions 22–32 (DNFLTGLGHRS) are excised as a propeptide. 3 cysteine pairs are disulfide-bonded: cysteine 37–cysteine 66, cysteine 44–cysteine 59, and cysteine 49–cysteine 67.

This sequence belongs to the beta-defensin family. Monomer. Homodimer.

It is found in the secreted. Its subcellular location is the membrane. In terms of biological role, has bactericidal activity. May act as a ligand for C-C chemokine receptor CCR6. Positively regulates the sperm motility and bactericidal activity in a CCR6-dependent manner. Binds to CCR6 and triggers Ca2+ mobilization in the sperm which is important for its motility. This chain is Beta-defensin 1 (DEFB1), found in Hylobates moloch (Silvery gibbon).